The chain runs to 866 residues: Autophagy-related protein 9 (866 aa).

Residues 1 to 94 lie on the Cytoplasmic side of the membrane; the sequence is MMSSGHKGPN…KGLWCIIVKW (94 aa). A helical transmembrane segment spans residues 95-115; the sequence is AVELLSLGFIICFSGFFLLYV. Residues 116–153 are Lumenal-facing; that stretch reads DWNGLQNAKCGMDAVESGTKPCDLVKEAIHPHPLSPFT. The helical transmembrane segment at 154–174 threads the bilayer; that stretch reads LTTAIIVGYLALFSVYWLFCF. The Cytoplasmic segment spans residues 175–319; the sequence is LRFFAQLKDT…VSNPTTLKKR (145 aa). The stretch at 320–340 is an intramembrane region; the sequence is LFVVGLAMLLLSPFLVIFMLV. Residues 341–404 are Cytoplasmic-facing; the sequence is YLFLRHAEQF…LKQFPSPIIS (64 aa). A helical membrane pass occupies residues 405–425; that stretch reads IIAKFVSFVSGGFAAVLIIIA. The Lumenal portion of the chain corresponds to 426–433; it reads FLEESLLE. Residues 434 to 454 form a helical membrane-spanning segment; that stretch reads GHIFGRNLFWYAAVFGTITAI. At 455–507 the chain is on the cytoplasmic side; sequence SRAAISDELLVLDPVGTMSLVVQNTHYMPKRWRGKENKDDVRLELETLFQYTG. The stretch at 508-528 is an intramembrane region; the sequence is MMLLEEIASIFITPFLLMFVV. The Cytoplasmic segment spans residues 529-866; the sequence is PKRVDDILQF…ETSTSSTTLR (338 aa). The disordered stretch occupies residues 744-781; sequence QPEGEDSYGSQHPLDGRNQWWGRGNHSQISTAHPATTN. Polar residues predominate over residues 768 to 781; the sequence is NHSQISTAHPATTN.

It belongs to the ATG9 family. Homotrimer; forms a homotrimer with a central pore that forms a path between the two membrane leaflets. As to expression, expressed in roots, leaves, stems and flowers.

Its subcellular location is the preautophagosomal structure membrane. Its function is as follows. Phospholipid scramblase involved in autophagy by mediating autophagosomal membrane expansion. Cycles between the preautophagosomal structure/phagophore assembly site (PAS) and the cytoplasmic vesicle pool and supplies membrane for the growing autophagosome. Lipid scramblase activity plays a key role in preautophagosomal structure/phagophore assembly by distributing the phospholipids that arrive through ATG2 from the cytoplasmic to the luminal leaflet of the bilayer, thereby driving autophagosomal membrane expansion. In addition to autophagy, also plays a role in necrotic cell death. Plays an essential role in plant nutrient recycling. In Arabidopsis thaliana (Mouse-ear cress), this protein is Autophagy-related protein 9.